A 407-amino-acid polypeptide reads, in one-letter code: UPF0597 protein NAMH_0191 (407 aa).

It belongs to the UPF0597 family.

The chain is UPF0597 protein NAMH_0191 from Nautilia profundicola (strain ATCC BAA-1463 / DSM 18972 / AmH).